The following is a 315-amino-acid chain: Cyclin-dependent kinase B2-2 (315 aa).

Residues Phe16–Phe306 form the Protein kinase domain. ATP-binding positions include Val22 to Val30 and Lys45. At Tyr27 the chain carries Phosphotyrosine. The active-site Proton acceptor is the Asp147. Thr181 bears the Phosphothreonine mark.

It belongs to the protein kinase superfamily. CMGC Ser/Thr protein kinase family. CDC2/CDKX subfamily. As to expression, expressed in flowers.

It carries out the reaction L-seryl-[protein] + ATP = O-phospho-L-seryl-[protein] + ADP + H(+). The enzyme catalyses L-threonyl-[protein] + ATP = O-phospho-L-threonyl-[protein] + ADP + H(+). The catalysed reaction is [DNA-directed RNA polymerase] + ATP = phospho-[DNA-directed RNA polymerase] + ADP + H(+). This is Cyclin-dependent kinase B2-2 (CDKB2-2) from Arabidopsis thaliana (Mouse-ear cress).